The sequence spans 317 residues: MGGVIKSIFTFVLIVEFIIGNLGNSFIALVNCIDWVKGRKISSVDRILTALAISKISLVWLIFGSWCVSVFFPALFATEKMFRMLTNIWTVINHFSVWLATGLGTFYFLKIANFSNSIFLYLKWRVKKVVLVLLLVTSVFLFLNIALINIHINASINGYRRNKTCSSDSSNFTRFSSLIVLTSTVFIFIPFTLSLAMFLLLIFSMWKHRKKMQHTVKRSGDASTKAHRGVKSMMTFFLLYAIFSLSFFISVWTSERLEENLIILSQVMGMAYPSCHSCVLILGNKKLRQASLSVLLWLRYMFKDGEPSGHKEFRESS.

At 1–7 (MGGVIKS) the chain is on the extracellular side. The helical transmembrane segment at 8 to 28 (IFTFVLIVEFIIGNLGNSFIA) threads the bilayer. Residues 29-55 (LVNCIDWVKGRKISSVDRILTALAISK) lie on the Cytoplasmic side of the membrane. Residues 56–76 (ISLVWLIFGSWCVSVFFPALF) traverse the membrane as a helical segment. The Extracellular segment spans residues 77–87 (ATEKMFRMLTN). Positions 86 and 89 each coordinate cholesterol. A helical transmembrane segment spans residues 88-108 (IWTVINHFSVWLATGLGTFYF). At 109-129 (LKIANFSNSIFLYLKWRVKKV) the chain is on the cytoplasmic side. Residues 130-150 (VLVLLLVTSVFLFLNIALINI) form a helical membrane-spanning segment. The Extracellular segment spans residues 151 to 184 (HINASINGYRRNKTCSSDSSNFTRFSSLIVLTST). 3 N-linked (GlcNAc...) asparagine glycosylation sites follow: Asn-153, Asn-162, and Asn-171. Val-180 is a cholesterol binding site. The helical transmembrane segment at 185 to 205 (VFIFIPFTLSLAMFLLLIFSM) threads the bilayer. Topologically, residues 206-232 (WKHRKKMQHTVKRSGDASTKAHRGVKS) are cytoplasmic. Residues 233–253 (MMTFFLLYAIFSLSFFISVWT) form a helical membrane-spanning segment. The Extracellular portion of the chain corresponds to 254-261 (SERLEENL). A helical membrane pass occupies residues 262–282 (IILSQVMGMAYPSCHSCVLIL). Cholesterol is bound by residues Ser-265 and Met-268. At 283–317 (GNKKLRQASLSVLLWLRYMFKDGEPSGHKEFRESS) the chain is on the cytoplasmic side.

Belongs to the G-protein coupled receptor T2R family. As to quaternary structure, core component of the TAS2R14-GNAI1 complex, consisting of TAS2R14, GNAI1, GNB1 and GNG2; within the complex interacts with GNAI1. Core component of the TAS2R14-GNAT3 complex, consisting of TAS2R14, GNAT3, GNB1 and GNG2; within the complex interacts with GNAT3. Core component of the TAS2R14-GNAS2 complex, consisting of TAS2R14, GNAS2, GNB1 and GNG2; within the complex interacts with GNAS2.

The protein localises to the membrane. It catalyses the reaction Ca(2+)(in) = Ca(2+)(out). The catalysed reaction is 3',5'-cyclic AMP(in) = 3',5'-cyclic AMP(out). Basal activity is enhanced by binding to bitter tastants, such as flufenamic acid and aristolochic acid. Regulated by cholesterol in a concentration-dependent manner. Gustducin-linked G-protein coupled receptor that plays a role in the perception of bitterness. The activity of this receptor stimulates GNAT3, activating the gustducin G-protein pathway. Likely plays a role in sensing the chemical composition of the gastrointestinal content and other extra-oral tissues via the inhibitory G-protein pathways. This is Taste receptor type 2 member 14 (TAS2R14) from Pan paniscus (Pygmy chimpanzee).